The following is a 299-amino-acid chain: UDP-N-acetylenolpyruvoylglucosamine reductase (299 aa).

The 169-residue stretch at 21-189 (RVGGPAQWLL…LSARFRLEPG (169 aa)) folds into the FAD-binding PCMH-type domain. Arg168 is an active-site residue. Residue Ser219 is the Proton donor of the active site. The active site involves Glu289.

The protein belongs to the MurB family. FAD serves as cofactor.

Its subcellular location is the cytoplasm. The enzyme catalyses UDP-N-acetyl-alpha-D-muramate + NADP(+) = UDP-N-acetyl-3-O-(1-carboxyvinyl)-alpha-D-glucosamine + NADPH + H(+). The protein operates within cell wall biogenesis; peptidoglycan biosynthesis. Its function is as follows. Cell wall formation. The polypeptide is UDP-N-acetylenolpyruvoylglucosamine reductase (Parasynechococcus marenigrum (strain WH8102)).